The following is a 589-amino-acid chain: 3-(3-hydroxy-phenyl)propionate/3-hydroxycinnamic acid hydroxylase (589 aa).

Residues 15-44 and 283-293 each bind FAD; these read DVLI…VAEK and FRVDRILLAGD.

This sequence belongs to the PheA/TfdB FAD monooxygenase family. It depends on FAD as a cofactor.

It carries out the reaction 3-(3-hydroxyphenyl)propanoate + NADH + O2 + H(+) = 3-(2,3-dihydroxyphenyl)propanoate + NAD(+) + H2O. It catalyses the reaction (2E)-3-(3-hydroxyphenyl)prop-2-enoate + NADH + O2 + H(+) = (2E)-3-(2,3-dihydroxyphenyl)prop-2-enoate + NAD(+) + H2O. It functions in the pathway aromatic compound metabolism; 3-phenylpropanoate degradation. Functionally, catalyzes the insertion of one atom of molecular oxygen into position 2 of the phenyl ring of 3-(3-hydroxyphenyl)propionate (3-HPP) and hydroxycinnamic acid (3HCI). This Comamonas testosteroni (Pseudomonas testosteroni) protein is 3-(3-hydroxy-phenyl)propionate/3-hydroxycinnamic acid hydroxylase.